We begin with the raw amino-acid sequence, 235 residues long: Carboxy-S-adenosyl-L-methionine synthase (235 aa).

Residues Tyr-35, 60–62 (GCS), 83–84 (DN), Asn-124, and Arg-191 each bind S-adenosyl-L-methionine.

The protein belongs to the class I-like SAM-binding methyltransferase superfamily. Cx-SAM synthase family. Homodimer.

The enzyme catalyses prephenate + S-adenosyl-L-methionine = carboxy-S-adenosyl-L-methionine + 3-phenylpyruvate + H2O. In terms of biological role, catalyzes the conversion of S-adenosyl-L-methionine (SAM) to carboxy-S-adenosyl-L-methionine (Cx-SAM). In Campylobacter jejuni subsp. jejuni serotype O:2 (strain ATCC 700819 / NCTC 11168), this protein is Carboxy-S-adenosyl-L-methionine synthase.